Consider the following 364-residue polypeptide: DNA replication and repair protein RecF (364 aa).

30–37 lines the ATP pocket; that stretch reads GNNAQGKT.

The protein belongs to the RecF family.

Its subcellular location is the cytoplasm. In terms of biological role, the RecF protein is involved in DNA metabolism; it is required for DNA replication and normal SOS inducibility. RecF binds preferentially to single-stranded, linear DNA. It also seems to bind ATP. In Clostridium botulinum (strain Langeland / NCTC 10281 / Type F), this protein is DNA replication and repair protein RecF.